A 118-amino-acid chain; its full sequence is Ribonuclease P protein component (118 aa).

The protein belongs to the RnpA family. As to quaternary structure, consists of a catalytic RNA component (M1 or rnpB) and a protein subunit.

The enzyme catalyses Endonucleolytic cleavage of RNA, removing 5'-extranucleotides from tRNA precursor.. Its function is as follows. RNaseP catalyzes the removal of the 5'-leader sequence from pre-tRNA to produce the mature 5'-terminus. It can also cleave other RNA substrates such as 4.5S RNA. The protein component plays an auxiliary but essential role in vivo by binding to the 5'-leader sequence and broadening the substrate specificity of the ribozyme. This Shewanella amazonensis (strain ATCC BAA-1098 / SB2B) protein is Ribonuclease P protein component.